The following is a 249-amino-acid chain: Protection of telomeres protein poz1 (249 aa).

In terms of assembly, interacts with pot1, rap1 and tpz1.

The protein localises to the cytoplasm. It localises to the nucleus. It is found in the chromosome. The protein resides in the telomere. Functionally, telomeric DNA-binding protein that negatively regulates telomerase and telomere length. The sequence is that of Protection of telomeres protein poz1 (poz1) from Schizosaccharomyces pombe (strain 972 / ATCC 24843) (Fission yeast).